The chain runs to 108 residues: Signal recognition particle 19 kDa protein (108 aa).

Belongs to the SRP19 family. In terms of assembly, part of the signal recognition particle protein translocation system, which is composed of SRP and FtsY. Archaeal SRP consists of a 7S RNA molecule of 300 nucleotides and two protein subunits: SRP54 and SRP19.

It is found in the cytoplasm. Involved in targeting and insertion of nascent membrane proteins into the cytoplasmic membrane. Binds directly to 7S RNA and mediates binding of the 54 kDa subunit of the SRP. In Thermococcus kodakarensis (strain ATCC BAA-918 / JCM 12380 / KOD1) (Pyrococcus kodakaraensis (strain KOD1)), this protein is Signal recognition particle 19 kDa protein.